The following is a 254-amino-acid chain: 4-hydroxy-tetrahydrodipicolinate reductase (254 aa).

7–12 (GASGRI) lines the NAD(+) pocket. Residue Arg-35 coordinates NADP(+). NAD(+)-binding positions include 91-93 (GTT) and 115-118 (AHNM). The Proton donor/acceptor role is filled by His-147. His-148 is a (S)-2,3,4,5-tetrahydrodipicolinate binding site. Catalysis depends on Lys-151, which acts as the Proton donor. 157 to 158 (GT) provides a ligand contact to (S)-2,3,4,5-tetrahydrodipicolinate.

Belongs to the DapB family.

It localises to the cytoplasm. It carries out the reaction (S)-2,3,4,5-tetrahydrodipicolinate + NAD(+) + H2O = (2S,4S)-4-hydroxy-2,3,4,5-tetrahydrodipicolinate + NADH + H(+). The enzyme catalyses (S)-2,3,4,5-tetrahydrodipicolinate + NADP(+) + H2O = (2S,4S)-4-hydroxy-2,3,4,5-tetrahydrodipicolinate + NADPH + H(+). It participates in amino-acid biosynthesis; L-lysine biosynthesis via DAP pathway; (S)-tetrahydrodipicolinate from L-aspartate: step 4/4. Catalyzes the conversion of 4-hydroxy-tetrahydrodipicolinate (HTPA) to tetrahydrodipicolinate. The chain is 4-hydroxy-tetrahydrodipicolinate reductase from Helicobacter pylori (strain HPAG1).